Reading from the N-terminus, the 623-residue chain is E3 ubiquitin-protein ligase DTX1 (623 aa).

WWE domains lie at 13 to 93 (HNFG…PVRR) and 94 to 170 (NFFE…RLRR). A disordered region spans residues 224-319 (KVPSGPPPAL…RASIPPGVPA (96 aa)). Residues 227 to 242 (SGPPPALPPPPPPPIH) are compositionally biased toward pro residues. The segment covering 292-311 (GQNNLNRPGEQRTSGSSSRA) has biased composition (polar residues). An RING-type zinc finger spans residues 413–474 (CTICMERLVT…DGSLQCPTCK (62 aa)).

Belongs to the Deltex family. In terms of assembly, may form a homo- or heterodimer with other members of the Deltex family. Probably interacts with Notch1. Specifically expressed in regions undergoing neuronal differentiation. Mainly colocalizes with Notch1.

It catalyses the reaction S-ubiquitinyl-[E2 ubiquitin-conjugating enzyme]-L-cysteine + [acceptor protein]-L-lysine = [E2 ubiquitin-conjugating enzyme]-L-cysteine + N(6)-ubiquitinyl-[acceptor protein]-L-lysine.. Its pathway is protein modification; protein ubiquitination. Functionally, regulator of Notch signaling, a signaling pathway involved in cell-cell communications that regulates a broad spectrum of cell-fate determinations. Probably acts both as a positive and negative regulator of Notch, depending on the developmental and cell context. Functions as a ubiquitin ligase protein in vivo, mediating ubiquitination and promoting degradation of MEKK1, suggesting that it may regulate the Notch pathway via some ubiquitin ligase activity. This is E3 ubiquitin-protein ligase DTX1 (dtx1) from Xenopus laevis (African clawed frog).